Reading from the N-terminus, the 1956-residue chain is Histone-lysine N-methyltransferase SETD1B (1956 aa).

Basic and acidic residues predominate over residues 1-20 (MSFKEAKPGERGKNPEDHGR). The disordered stretch occupies residues 1–46 (MSFKEAKPGERGKNPEDHGRKQTASWINGMEAGNQPSTSGEKKSHH). The RRM domain occupies 111 to 199 (DEFYVGPVPP…NIIHVELDTK (89 aa)). 9 disordered regions span residues 226–478 (LDAS…LEAE), 502–637 (IAGD…VTPS), 662–696 (GFPPLPPPPPPQPGFPMPPPLPPPPPPTHPSVTVP), 926–1148 (KEPP…DEMQ), 1341–1386 (EDLP…TLTS), 1420–1464 (PTFP…VPSP), 1512–1553 (HLTS…NYET), 1627–1655 (TKHKKSRNSRHNNRYDEFSTVPSPEFSPP), and 1766–1790 (IDTQGKSIPAQPQASTRAGSERRSE). 3 stretches are compositionally biased toward polar residues: residues 254–290 (VTPNSSTPFSHDTAYSSSRQGTPNSYSQFTPQSQGTP), 298–312 (PFSQDSSYSSRQTTP), and 346–361 (SSGSYRGTEHTFNVTR). The span at 363 to 373 (QPEPVQVPRTP) shows a compositional bias: pro residues. 3 stretches are compositionally biased toward polar residues: residues 375-407 (LSHSSGNYKSAFSPYQGNTVFPQTDESQYPQTS), 416-432 (GPQTSDSYSDAGCNSAS), and 451-464 (DSTTEQKASFSQTP). Over residues 517–527 (SPISSSSSQLS) the composition is skewed to low complexity. Composition is skewed to polar residues over residues 535–551 (GSRYQDVTPSSRPSSTG) and 575–593 (SLCQNSRSASPIDQINQSG). Over residues 594-605 (RKTESLDKKELV) the composition is skewed to basic and acidic residues. Positions 625-634 (EDMEISDDEV) are enriched in acidic residues. Acidic residues predominate over residues 986–1000 (SEGEEEVESEGDDGE). Positions 1001 to 1011 (TSDKEDSSSEK) are enriched in basic and acidic residues. Residues 1068-1122 (DSSDESEESSEYESSSDSDEKEEEDDEEEELVFGDDQSEDQDLGQEYEVETDREE) are compositionally biased toward acidic residues. The span at 1341–1352 (EDLPRTPGRDIV) shows a compositional bias: basic and acidic residues. 2 stretches are compositionally biased toward polar residues: residues 1358–1367 (LGKSQSTETV) and 1450–1462 (EPTSASLTMNSVP). Residues 1541–1551 (SAHEFETEKNY) are compositionally biased toward basic and acidic residues. Residues 1628–1638 (KHKKSRNSRHN) are compositionally biased toward basic residues. Residues 1769-1783 (QGKSIPAQPQASTRA) show a composition bias toward polar residues. The short motif at 1788–1793 (RSEQRR) is the RxxxRR motif element. In terms of domain architecture, SET spans 1817 to 1934 (KKLRFCKSHI…VNEEITYDYK (118 aa)). Y1933 lines the S-adenosyl-L-methionine pocket. Residues 1940 to 1956 (VKIPCLCGAENCRGTLN) enclose the Post-SET domain.

Belongs to the class V-like SAM-binding methyltransferase superfamily. As to quaternary structure, component of the SET1B/COMPASS complex.

Its subcellular location is the nucleus speckle. It is found in the chromosome. The catalysed reaction is L-lysyl(4)-[histone H3] + 3 S-adenosyl-L-methionine = N(6),N(6),N(6)-trimethyl-L-lysyl(4)-[histone H3] + 3 S-adenosyl-L-homocysteine + 3 H(+). In terms of biological role, histone methyltransferase that specifically methylates 'Lys-4' of histone H3, when part of the SET1 histone methyltransferase (HMT) complex, but not if the neighboring 'Lys-9' residue is already methylated. H3 'Lys-4' methylation represents a specific tag for epigenetic transcriptional activation. The polypeptide is Histone-lysine N-methyltransferase SETD1B (setd1b) (Xenopus tropicalis (Western clawed frog)).